We begin with the raw amino-acid sequence, 528 residues long: MTQTAEKPFGKLRSFLWPIHMHELKKVLPMFLMFFCISFNYTILRDTKDTLIVTAPGSGAEAIPFIKLWLVVPSAVVFMLIYAKLSNILNKQALFFAVLSPFVVFFALFPVVIYPCRHILHPTAFADTLQSILPSGFMGFIAMLRNWTFAVFYVLSELWGSVMLSLMFWGFANEITKISEAKRFYALFGVGANVALLISGPAIIWSSKLRASLGEGVDPWGVSLYFLMAMFLCSCAIIAACYWWMNRYVLTDPRFYNPAELKAKKSKPKMSMGESFSYLLRSPYMLLLALLVICYGICINLVEVTWKSQLKMQFPNPNDYSAFMGNFSFWTGVVSVFVMLFIGGNVIRRFGWLTGALVTPIMVLVTGAVFFALVIFRDHATGLVAALGTTPLMLAVVVGAIQNILSKSTKYALFDATKEMAYIPLDQEQKVKGKAAIDVVAARFGKSGGSLIQQGLLVVCGSIGAMTPFLAVALFAIIMVWLTSATKLNKLFLAASAAKEQELAEAAAAEKEASSAAKESAPAIEGVS.

Transmembrane regions (helical) follow at residues L24 to L44, I63 to A83, A93 to I113, A124 to L144, F149 to W169, F184 to I204, W220 to A240, Y284 to V304, F327 to I347, A356 to F376, T381 to I401, and I463 to T483.

It belongs to the ADP/ATP translocase tlc family.

The protein localises to the cell membrane. The chain is ADP,ATP carrier protein 1 (tlcA) from Chlamydia trachomatis serovar D (strain ATCC VR-885 / DSM 19411 / UW-3/Cx).